The sequence spans 330 residues: (11Z)-hexadec-11-enoyl-CoA conjugase (330 aa).

The next 2 helical transmembrane spans lie at 37-57 (IVVM…YGLY) and 65-85 (LATS…ITAG). Residues 87-92 (HRLWSH) carry the Histidine box-1 motif. The helical transmembrane segment at 101-121 (LEILLMVFNSIAFQNTIFTWV) threads the bilayer. Residues 124–128 (HRLHH) carry the Histidine box-2 motif. 2 helical membrane passes run 185–205 (AIPF…MYFW) and 216–238 (TVLR…HLWG). Positions 264–268 (HNYHH) match the Histidine box-3 motif.

Belongs to the fatty acid desaturase type 1 family. Fe(2+) serves as cofactor. Highly expressed in the pheromone gland.

It is found in the membrane. It catalyses the reaction an 11,12-saturated fatty acyl-CoA + 2 Fe(II)-[cytochrome b5] + O2 + 2 H(+) = an (11Z)-Delta(11)-fatty acyl-CoA + 2 Fe(III)-[cytochrome b5] + 2 H2O. The catalysed reaction is (11Z)-hexadecenoyl-CoA + AH2 + O2 = (10E,12Z)-hexadecadienoyl-CoA + A + 2 H2O. Its function is as follows. Fatty acid desaturase that catalyzes 2 consecutive steps in the biosynthesis of bombykol, a sex pheromone produced by the moth. First acts as an acyl-CoA Delta(11) desaturase (1) by catalyzing the formation of Delta(11) fatty acyl precursors. Then acts as a (11Z)-hexadec-11-enoyl-CoA conjugase (2) by converting a single cis double bond at position 11 of (11Z)-hexadec-11-enoyl-CoA into conjugated 10 trans and 12 cis double bonds. This Bombyx mori (Silk moth) protein is (11Z)-hexadec-11-enoyl-CoA conjugase.